We begin with the raw amino-acid sequence, 372 residues long: Neuropeptide S receptor (372 aa).

At 1-52 (MPANLTEGSFHANQTVPMLDSSPVACTEIVTFTEALEAEEWGSFYSSFKTEQ) the chain is on the extracellular side. 2 N-linked (GlcNAc...) asparagine glycosylation sites follow: asparagine 4 and asparagine 13. Residues 53-73 (LITLWVLFVFTIVGNSVVLFS) traverse the membrane as a helical segment. The Cytoplasmic portion of the chain corresponds to 74-82 (TWRRKRKSR). A helical transmembrane segment spans residues 83-103 (MTFFVTQLAITDSFTGLINIL). The Extracellular portion of the chain corresponds to 104–122 (TDIIWRFTGDFMAPDLVCR). A disulfide bridge links cysteine 121 with cysteine 198. Residues 123-143 (IVRYLQVVLLYASTYVLVSLS) form a helical membrane-spanning segment. Over 144 to 165 (IDRYHAIVYPMKFLQGAEKQAK) the chain is Cytoplasmic. A helical transmembrane segment spans residues 166–186 (VLIGIAWSLSFLFSIPTLIIF). Residues 187–213 (GKRTLSNGEVQCWALWPDDSYWTPYMT) lie on the Extracellular side of the membrane. The chain crosses the membrane as a helical span at residues 214–234 (IVAFLVYFIPLTIISVIYGLV). Residues 235 to 276 (IRTIWIKSKAHETVISNCSDGELCCSYNRGLISKAKIKAIKY) lie on the Cytoplasmic side of the membrane. A helical transmembrane segment spans residues 277-297 (SIVIILAFICCWSPYFLFDML). The Extracellular segment spans residues 298–313 (DNFNLLPDTKERFYAS). A helical membrane pass occupies residues 314–334 (VIIQNLPALNSAINPLIYCIF). Topologically, residues 335-372 (SGSLCSPCKVQRSQDSRMTYRERSERHEMQILSKPEFI) are cytoplasmic.

The protein belongs to the G-protein coupled receptor 1 family. Vasopressin/oxytocin receptor subfamily.

The protein localises to the cell membrane. Its function is as follows. G-protein coupled receptor for neuropeptide S (NPS). Promotes mobilization of intracellular Ca(2+) stores. Inhibits cell growth in response to NPS binding. Involved in pathogenesis of asthma and other IgE-mediated diseases. The chain is Neuropeptide S receptor (Npsr1) from Rattus norvegicus (Rat).